Consider the following 103-residue polypeptide: Pyrimidine/purine nucleoside phosphorylase (103 aa).

The protein belongs to the nucleoside phosphorylase PpnP family.

The enzyme catalyses a purine D-ribonucleoside + phosphate = a purine nucleobase + alpha-D-ribose 1-phosphate. It carries out the reaction adenosine + phosphate = alpha-D-ribose 1-phosphate + adenine. The catalysed reaction is cytidine + phosphate = cytosine + alpha-D-ribose 1-phosphate. It catalyses the reaction guanosine + phosphate = alpha-D-ribose 1-phosphate + guanine. The enzyme catalyses inosine + phosphate = alpha-D-ribose 1-phosphate + hypoxanthine. It carries out the reaction thymidine + phosphate = 2-deoxy-alpha-D-ribose 1-phosphate + thymine. The catalysed reaction is uridine + phosphate = alpha-D-ribose 1-phosphate + uracil. It catalyses the reaction xanthosine + phosphate = alpha-D-ribose 1-phosphate + xanthine. Functionally, catalyzes the phosphorolysis of diverse nucleosides, yielding D-ribose 1-phosphate and the respective free bases. Can use uridine, adenosine, guanosine, cytidine, thymidine, inosine and xanthosine as substrates. Also catalyzes the reverse reactions. This Methylobacillus flagellatus (strain ATCC 51484 / DSM 6875 / VKM B-1610 / KT) protein is Pyrimidine/purine nucleoside phosphorylase.